The sequence spans 122 residues: Fluoride-specific ion channel FluC (122 aa).

4 helical membrane passes run 6–26, 33–53, 60–80, and 101–121; these read LVVGFGGFIGAILRMFSINLV, SISLGTLFVNVLGSFIIGLLF, GLSPLLKSFISTGFLGAFTTF, and LNIILNVFLCLFAAWLGFIIF. 2 residues coordinate Na(+): Gly75 and Thr78.

It belongs to the fluoride channel Fluc/FEX (TC 1.A.43) family.

The protein resides in the cell inner membrane. It carries out the reaction fluoride(in) = fluoride(out). Na(+) is not transported, but it plays an essential structural role and its presence is essential for fluoride channel function. Its function is as follows. Fluoride-specific ion channel. Important for reducing fluoride concentration in the cell, thus reducing its toxicity. This chain is Fluoride-specific ion channel FluC, found in Campylobacter jejuni subsp. jejuni serotype O:6 (strain 81116 / NCTC 11828).